We begin with the raw amino-acid sequence, 122 residues long: Large ribosomal subunit protein uL14c (122 aa).

The protein belongs to the universal ribosomal protein uL14 family. In terms of assembly, part of the 50S ribosomal subunit.

It is found in the plastid. It localises to the chloroplast. Functionally, binds to 23S rRNA. The protein is Large ribosomal subunit protein uL14c of Capsella bursa-pastoris (Shepherd's purse).